The primary structure comprises 178 residues: Large ribosomal subunit protein bL17 (178 aa).

The tract at residues 150-178 (PADEPVVAEENAPQSAVKDAVDECEGKAD) is disordered. Residues 168-178 (DAVDECEGKAD) are compositionally biased toward basic and acidic residues.

The protein belongs to the bacterial ribosomal protein bL17 family. Part of the 50S ribosomal subunit. Contacts protein L32.

The sequence is that of Large ribosomal subunit protein bL17 from Geobacter metallireducens (strain ATCC 53774 / DSM 7210 / GS-15).